A 216-amino-acid chain; its full sequence is Glycerol-3-phosphate acyltransferase (216 aa).

A run of 5 helical transmembrane segments spans residues 5 to 25 (LIALAAAAGGYLFGSIPFGLV), 70 to 90 (IAAAVFGYFLGTTAGLVAGAF), 118 to 138 (VVFWPVGLTVIATWLAMAAIF), 140 to 160 (ISSLAALAAALAAPFAALAWG), and 164 to 184 (VAIMAGLLTVLIYWLHRANIS). A compositionally biased stretch (basic and acidic residues) spans 192–201 (PRIGGKKSET). The interval 192-216 (PRIGGKKSETSADVSDGDDPDTPAT) is disordered. Residues 206-216 (SDGDDPDTPAT) show a composition bias toward acidic residues.

This sequence belongs to the PlsY family. In terms of assembly, probably interacts with PlsX.

It localises to the cell inner membrane. It carries out the reaction an acyl phosphate + sn-glycerol 3-phosphate = a 1-acyl-sn-glycero-3-phosphate + phosphate. Its pathway is lipid metabolism; phospholipid metabolism. Catalyzes the transfer of an acyl group from acyl-phosphate (acyl-PO(4)) to glycerol-3-phosphate (G3P) to form lysophosphatidic acid (LPA). This enzyme utilizes acyl-phosphate as fatty acyl donor, but not acyl-CoA or acyl-ACP. The protein is Glycerol-3-phosphate acyltransferase of Maricaulis maris (strain MCS10) (Caulobacter maris).